A 624-amino-acid polypeptide reads, in one-letter code: Protein POLLEN DEFECTIVE IN GUIDANCE 1 (624 aa).

The tract at residues 20–63 (SFENDDTSIRRSSSDPITGNVASESPRDYGKRKRSKKKKKKVNQ) is disordered. Positions 33-42 (SDPITGNVAS) are enriched in polar residues. The span at 49 to 61 (GKRKRSKKKKKKV) shows a compositional bias: basic residues. Transmembrane regions (helical) follow at residues 263-283 (VLID…LTVM), 305-325 (ASEL…ILLG), 391-411 (FVSD…ILLA), 413-433 (AITL…LLVS), 545-565 (LTFV…PVYA), and 578-598 (LWMV…KVLI).

This sequence belongs to the TAPT1 family. As to quaternary structure, interacts with CRT3, but not with CRT1 or CNX. As to expression, expressed in inflorescences, siliques, roots and shoots. Expressed in early embryo, endosperm, mature pollen and pollen tubes, synergide cells and weakly in antipodal cells.

It localises to the membrane. Its subcellular location is the endoplasmic reticulum lumen. Its function is as follows. Probable component of the calreticulin 3 (CRT3) complex, acting probably as a co-chaperone involved in protein retention in the endoplasmic reticulum lumen. Required for micropylar pollen tube guidance. Plays an essential role in cell plate orientation or positioning in early embryo patterning. This Arabidopsis thaliana (Mouse-ear cress) protein is Protein POLLEN DEFECTIVE IN GUIDANCE 1 (POD1).